We begin with the raw amino-acid sequence, 300 residues long: Ribosomal RNA small subunit methyltransferase H (300 aa).

Residues 38 to 40 (GGH), E55, I85, D102, and H109 each bind S-adenosyl-L-methionine.

Belongs to the methyltransferase superfamily. RsmH family.

The protein resides in the cytoplasm. The catalysed reaction is cytidine(1402) in 16S rRNA + S-adenosyl-L-methionine = N(4)-methylcytidine(1402) in 16S rRNA + S-adenosyl-L-homocysteine + H(+). Specifically methylates the N4 position of cytidine in position 1402 (C1402) of 16S rRNA. The polypeptide is Ribosomal RNA small subunit methyltransferase H (Brachyspira hyodysenteriae (strain ATCC 49526 / WA1)).